A 429-amino-acid chain; its full sequence is Keratin, type I cytoskeletal 20 (429 aa).

Residues 1 to 26 form a disordered region; it reads MDFSRRSFHRSLSSSSQGPALSTSGS. A head region spans residues 1–74; it reads MDFSRRSFHR…SNGGDLFGGN (74 aa). Residues 10-26 show a composition bias toward low complexity; that stretch reads RSLSSSSQGPALSTSGS. Residues Ser-13, Ser-16, and Ser-26 each carry the phosphoserine modification. Residues 75–110 are coil 1A; that stretch reads EKLAMQNLNDRLASYLEKVRSLEQSNSKLEAQIKQW. The region spanning 75 to 386 is the IF rod domain; sequence EKLAMQNLND…RLLEGEDIKT (312 aa). Residues 111-128 are linker 1; sequence YETNAPSTIRDYSSYYAQ. Residues 129 to 220 are coil 1B; the sequence is IKELQDQIKD…KEHQEEVEVL (92 aa). Residues 221 to 243 form a linker 12 region; the sequence is RRQLGNNVNVEVDAAPGLNLGEI. Positions 244-382 are coil 2; that stretch reads MNEMRQKYEI…ATYRRLLEGE (139 aa). A tail region spans residues 383-429; sequence DIKTTEYQLNTLEAKDIKKTRKIKTVVEEVVDGKVVSSEVKEIEENI.

Belongs to the intermediate filament family. In terms of assembly, heterotetramer of two type I and two type II keratins. Associates with KRT8. In terms of processing, hyperphosphorylation at Ser-13 occurs during the early stages of apoptosis but becomes less prominent during the later stages. Phosphorylation at Ser-13 also increases in response to stress brought on by cell injury. Post-translationally, proteolytically cleaved by caspases during apoptosis. Cleavage occurs at Asp-233. As to expression, expressed predominantly in the intestinal epithelium in differentiated villus cells.

In terms of biological role, plays a significant role in maintaining keratin filament organization in intestinal epithelia. When phosphorylated, plays a role in the secretion of mucin in the small intestine. The chain is Keratin, type I cytoskeletal 20 (Krt20) from Rattus norvegicus (Rat).